We begin with the raw amino-acid sequence, 516 residues long: Ribose import ATP-binding protein RbsA (516 aa).

ABC transporter domains follow at residues 14-250 (LRLT…VGRA) and 261-504 (AKGA…AGIG). An ATP-binding site is contributed by 46–53 (GENGAGKS).

The protein belongs to the ABC transporter superfamily. Ribose importer (TC 3.A.1.2.1) family. The complex is composed of an ATP-binding protein (RbsA), two transmembrane proteins (RbsC) and a solute-binding protein (RbsB).

The protein resides in the cell inner membrane. It carries out the reaction D-ribose(out) + ATP + H2O = D-ribose(in) + ADP + phosphate + H(+). Its function is as follows. Part of the ABC transporter complex RbsABC involved in ribose import. Responsible for energy coupling to the transport system. The polypeptide is Ribose import ATP-binding protein RbsA (Jannaschia sp. (strain CCS1)).